Reading from the N-terminus, the 985-residue chain is Coiled-coil domain-containing protein 33 (985 aa).

The tract at residues 228–263 (MSPFSTDSDQEGLSWEAGPWQHPAQVPEEPQGRLDT) is disordered. The C2 domain maps to 263–398 (TSQDPYPAAN…VFLRGVNEPL (136 aa)). Residues 599–745 (VEMNNYRRAM…LEERLCERKE (147 aa)) are a coiled coil. The segment at 821–842 (AERLQDTNGPGHPKSTETLPAQ) is disordered. The stretch at 885–928 (DKFNLLAKLEQAQSRILSLENQLEESARHWAREKQNLAIRLQEQ) forms a coiled coil. Residues 931–985 (GFGQPPNSIIIDQPNAGASKNPQQLSKLEPSLPSSDKKLNRPSDSQIEISNNQKT) form a disordered region. 2 stretches are compositionally biased toward polar residues: residues 946–956 (AGASKNPQQLS) and 972–985 (PSDS…NQKT).

In Mus musculus (Mouse), this protein is Coiled-coil domain-containing protein 33 (Ccdc33).